The chain runs to 105 residues: Flagellar transcriptional regulator FlhD (105 aa).

Belongs to the FlhD family. In terms of assembly, homodimer; disulfide-linked. Forms a heterohexamer composed of two FlhC and four FlhD subunits. Each FlhC binds a FlhD dimer, forming a heterotrimer, and a hexamer assembles by dimerization of two heterotrimers.

The protein localises to the cytoplasm. Functions in complex with FlhC as a master transcriptional regulator that regulates transcription of several flagellar and non-flagellar operons by binding to their promoter region. Activates expression of class 2 flagellar genes, including fliA, which is a flagellum-specific sigma factor that turns on the class 3 genes. Also regulates genes whose products function in a variety of physiological pathways. In Ralstonia pickettii (strain 12J), this protein is Flagellar transcriptional regulator FlhD.